Reading from the N-terminus, the 265-residue chain is Indole-3-glycerol phosphate synthase (265 aa).

The protein belongs to the TrpC family.

The enzyme catalyses 1-(2-carboxyphenylamino)-1-deoxy-D-ribulose 5-phosphate + H(+) = (1S,2R)-1-C-(indol-3-yl)glycerol 3-phosphate + CO2 + H2O. It participates in amino-acid biosynthesis; L-tryptophan biosynthesis; L-tryptophan from chorismate: step 4/5. This is Indole-3-glycerol phosphate synthase from Chromobacterium violaceum (strain ATCC 12472 / DSM 30191 / JCM 1249 / CCUG 213 / NBRC 12614 / NCIMB 9131 / NCTC 9757 / MK).